The chain runs to 237 residues: Ribosomal RNA small subunit methyltransferase G (237 aa).

Residues Gly-78, Phe-83, 129 to 130 (AE), and Arg-148 contribute to the S-adenosyl-L-methionine site.

This sequence belongs to the methyltransferase superfamily. RNA methyltransferase RsmG family.

The protein resides in the cytoplasm. In terms of biological role, specifically methylates the N7 position of a guanine in 16S rRNA. This is Ribosomal RNA small subunit methyltransferase G from Streptococcus thermophilus (strain ATCC BAA-491 / LMD-9).